A 526-amino-acid polypeptide reads, in one-letter code: MEAEESESFSYPMLLPSDGLYPEDDDDADMDQDKNPEENVMNEKEDEDVDAVDEKSGEEDVEMDTMEDENENDEDTEQTSEKKETEETPKENPLEKLKQKASTASFYDVVPTLAIPMATSINAFAFTSDLKWLFTGGEDGYIRKYDFFPSINGDLSLTVAQRHPFVDTVTKAGILLNYWENAYDGNKPSSVYSLAAHSRGLWVLSGVNNGDIILYSTRHQEGYPVTSLKKHTAPVSCLALHGSEKKVLSGSWDKMVYYWDLNTGDAISTYNCESGQISNIVYRPSGAVNPWGSESDDMRSLFGTPASSSSYDALFDEEVEKAIEEETKSVQANEENETEKPSQTESTTNNDNIKAPSESSSEESNIFLTTSIDGVMNVWDHRMVDSVLKYPVPKGVPPWAMSACWSPDGNNIYIGRRNGIVEEYNIHSGKEPVRSLKMPLDSGPVSNVYSMPNGRHLVISSFDNIRLYDLQSKAGIGFLIIPGHHGGLVSSLYVDTSCQFMFSASGNRGWQGTTTEVFLGYQIMTS.

The segment at 1-98 is disordered; the sequence is MEAEESESFS…PKENPLEKLK (98 aa). The span at 21-30 shows a compositional bias: acidic residues; it reads YPEDDDDADM. Residues 31–43 show a composition bias toward basic and acidic residues; it reads DQDKNPEENVMNE. Positions 44 to 78 are enriched in acidic residues; it reads KEDEDVDAVDEKSGEEDVEMDTMEDENENDEDTEQ. Positions 79–98 are enriched in basic and acidic residues; the sequence is TSEKKETEETPKENPLEKLK. WD repeat units lie at residues 116–155, 186–225, 230–271, 348–389, 395–434, and 440–478; these read PMAT…NGDL, NKPS…GYPV, KHTA…STYN, TNND…SVLK, GVPP…EPVR, and LDSG…GIGF. Residues 327–364 form a disordered region; it reads TKSVQANEENETEKPSQTESTTNNDNIKAPSESSSEES. The segment covering 341–364 has biased composition (polar residues); sequence PSQTESTTNNDNIKAPSESSSEES.

This sequence belongs to the WD repeat SPT8 family. As to quaternary structure, component of the 1.8 MDa SAGA (Spt-Ada-Gcn5 acetyltransferase) complex, which is composed of 19 subunits tra1, spt7, taf5, ngg1/ada3, sgf73, spt20, spt8, taf12, taf6, hfi1/ada1, ubp8, gcn5, ada2, spt3, sgf29, taf10, taf9, sgf11 and sus1. The SAGA complex is composed of 4 modules, namely the HAT (histone acetyltransferase) module (gcn5, ada2, ngg1/ada3 and sgf29), the DUB (deubiquitinating) module (ubp8, sgf11, sgf73 and sus1), the core or TAF (TBP-associated factor) module (taf5, taf6, taf9, taf10 and taf12), and the Tra1 or SPT (Suppressor of Ty) module (tra1, hfi1/ada1, spt3, spt7, spt8 and spt20). The Tra1/SPT module binds activators, the core module recruits TBP (TATA-binding protein), the HAT module contains the histone H3 acetyltransferase gcn5, and the DUB module comprises the histone H2B deubiquitinase ubp8.

It is found in the cytoplasm. It localises to the nucleus. In terms of biological role, component of the transcription coactivator SAGA complex. SAGA acts as a general cofactor required for essentially all RNA polymerase II transcription. At the promoters, SAGA is required for transcription pre-initiation complex (PIC) recruitment. It influences RNA polymerase II transcriptional activity through different activities such as TBP interaction (via core/TAF module) and promoter selectivity, interaction with transcription activators (via Tra1/SPT module), and chromatin modification through histone acetylation (via HAT module) and deubiquitination (via DUB module). SAGA preferentially acetylates histones H3 (to form H3K9ac, H3K14ac, H3K18ac and H3K23ac) and H2B and deubiquitinates histone H2B. SAGA interacts with DNA via upstream activating sequences (UASs). During SAGA-mediated transcriptional inhibition, spt3 and spt8 prevent binding of TBP to the TATA box. As part of the HAT module, involved in positive regulation of matings. The sequence is that of SAGA complex subunit Spt8 (spt8) from Schizosaccharomyces pombe (strain 972 / ATCC 24843) (Fission yeast).